The sequence spans 148 residues: Large ribosomal subunit protein bL9 (148 aa).

Belongs to the bacterial ribosomal protein bL9 family.

Its function is as follows. Binds to the 23S rRNA. This chain is Large ribosomal subunit protein bL9, found in Methylobacillus flagellatus (strain ATCC 51484 / DSM 6875 / VKM B-1610 / KT).